A 103-amino-acid chain; its full sequence is Large ribosomal subunit protein bL21 (103 aa).

It belongs to the bacterial ribosomal protein bL21 family. As to quaternary structure, part of the 50S ribosomal subunit. Contacts protein L20.

This protein binds to 23S rRNA in the presence of protein L20. This Borreliella afzelii (strain PKo) (Borrelia afzelii) protein is Large ribosomal subunit protein bL21.